The sequence spans 297 residues: MLELYEKRRALLLLRLAAMFLSLAALLITVLNREDGFFSINVFGSPQPILAKATADFTLVKGLKFFAGAMGIVAGYSFLQLAIAMASIFSGAPSILGGKRMAWLCFVGDMTASHLCAAAAAVSAQLAYLGKRGAPMWSAVCTYFSHYCLVFGLAVILAFLATLAALLVASISSYHLAYDVFCALYAMYKELVVDEVCSRSMKKTIPRIIKSGHQQRHHHRKPPLAPHCHGATSCKLCILQQQQWADLELHLSRAITLSAPSAVEMKIPPPPSVPSVVEMEMEIPSVSRVLEMETPCK.

The Cytoplasmic segment spans residues 1-10; it reads MLELYEKRRA. The helical transmembrane segment at 11 to 31 threads the bilayer; it reads LLLLRLAAMFLSLAALLITVL. The Extracellular portion of the chain corresponds to 32–64; sequence NREDGFFSINVFGSPQPILAKATADFTLVKGLK. Residues 65–85 traverse the membrane as a helical segment; that stretch reads FFAGAMGIVAGYSFLQLAIAM. The Cytoplasmic portion of the chain corresponds to 86–101; that stretch reads ASIFSGAPSILGGKRM. A helical membrane pass occupies residues 102-122; it reads AWLCFVGDMTASHLCAAAAAV. At 123-148 the chain is on the extracellular side; that stretch reads SAQLAYLGKRGAPMWSAVCTYFSHYC. A helical transmembrane segment spans residues 149–169; it reads LVFGLAVILAFLATLAALLVA. At 170–297 the chain is on the cytoplasmic side; sequence SISSYHLAYD…RVLEMETPCK (128 aa).

This sequence belongs to the Casparian strip membrane proteins (CASP) family. As to quaternary structure, homodimer and heterodimers.

The protein localises to the cell membrane. The chain is CASP-like protein 2U8 from Selaginella moellendorffii (Spikemoss).